The sequence spans 351 residues: GTP 3',8-cyclase (351 aa).

A Radical SAM core domain is found at Arg29–Pro254. A GTP-binding site is contributed by Arg38. Residues Cys45 and Cys49 each coordinate [4Fe-4S] cluster. Residue Tyr51 participates in S-adenosyl-L-methionine binding. Cys52 lines the [4Fe-4S] cluster pocket. GTP is bound at residue Arg89. Residue Gly93 coordinates S-adenosyl-L-methionine. Thr120 lines the GTP pocket. Position 144 (Ser144) interacts with S-adenosyl-L-methionine. Lys181 is a GTP binding site. Met214 is an S-adenosyl-L-methionine binding site. 2 residues coordinate [4Fe-4S] cluster: Cys278 and Cys281. Arg283–Arg285 contributes to the GTP binding site. A [4Fe-4S] cluster-binding site is contributed by Cys295.

The protein belongs to the radical SAM superfamily. MoaA family. As to quaternary structure, monomer and homodimer. Requires [4Fe-4S] cluster as cofactor.

The catalysed reaction is GTP + AH2 + S-adenosyl-L-methionine = (8S)-3',8-cyclo-7,8-dihydroguanosine 5'-triphosphate + 5'-deoxyadenosine + L-methionine + A + H(+). It participates in cofactor biosynthesis; molybdopterin biosynthesis. Its function is as follows. Catalyzes the cyclization of GTP to (8S)-3',8-cyclo-7,8-dihydroguanosine 5'-triphosphate. The protein is GTP 3',8-cyclase of Rhodococcus opacus (strain B4).